A 204-amino-acid chain; its full sequence is Urease accessory protein UreG (204 aa).

10–17 (GPVGAGKT) is a GTP binding site.

The protein belongs to the SIMIBI class G3E GTPase family. UreG subfamily. In terms of assembly, homodimer. UreD, UreF and UreG form a complex that acts as a GTP-hydrolysis-dependent molecular chaperone, activating the urease apoprotein by helping to assemble the nickel containing metallocenter of UreC. The UreE protein probably delivers the nickel.

It is found in the cytoplasm. Functionally, facilitates the functional incorporation of the urease nickel metallocenter. This process requires GTP hydrolysis, probably effectuated by UreG. In Bacillus sp. (strain TB-90), this protein is Urease accessory protein UreG.